We begin with the raw amino-acid sequence, 196 residues long: Potassium-transporting ATPase KdpC subunit (196 aa).

The chain crosses the membrane as a helical span at residues 7–27; the sequence is PALVLFFVLTLLTGVAYPLAV.

Belongs to the KdpC family. In terms of assembly, the system is composed of three essential subunits: KdpA, KdpB and KdpC.

Its subcellular location is the cell inner membrane. Part of the high-affinity ATP-driven potassium transport (or Kdp) system, which catalyzes the hydrolysis of ATP coupled with the electrogenic transport of potassium into the cytoplasm. This subunit acts as a catalytic chaperone that increases the ATP-binding affinity of the ATP-hydrolyzing subunit KdpB by the formation of a transient KdpB/KdpC/ATP ternary complex. The sequence is that of Potassium-transporting ATPase KdpC subunit from Polaromonas naphthalenivorans (strain CJ2).